The primary structure comprises 490 residues: Cytochrome P450 71B29 (490 aa).

The chain crosses the membrane as a helical span at residues 1-21; the sequence is MAIILCFLILLPLILIFLKKL. Cys440 provides a ligand contact to heme.

It belongs to the cytochrome P450 family. It depends on heme as a cofactor.

It localises to the membrane. In Arabidopsis thaliana (Mouse-ear cress), this protein is Cytochrome P450 71B29 (CYP71B29).